Reading from the N-terminus, the 461-residue chain is Bifunctional protein GlmU (461 aa).

The pyrophosphorylase stretch occupies residues 1–227 (MEVIALILAA…PDEVLGVNDR (227 aa)). Residues 8–11 (LAAG), K22, Q73, 78–79 (GT), 100–102 (YGD), G137, E152, N167, and N225 each bind UDP-N-acetyl-alpha-D-glucosamine. D102 lines the Mg(2+) pocket. A Mg(2+)-binding site is contributed by N225. The interval 228–248 (RQLAELERIYQVHQARALMER) is linker. The tract at residues 249–461 (GVTLRDPARF…EKARKESCAE (213 aa)) is N-acetyltransferase. Residues R332 and K350 each contribute to the UDP-N-acetyl-alpha-D-glucosamine site. The active-site Proton acceptor is the H362. Y365 and N376 together coordinate UDP-N-acetyl-alpha-D-glucosamine. Residues A379, 385-386 (NY), S404, A422, and R439 each bind acetyl-CoA.

In the N-terminal section; belongs to the N-acetylglucosamine-1-phosphate uridyltransferase family. This sequence in the C-terminal section; belongs to the transferase hexapeptide repeat family. In terms of assembly, homotrimer. Mg(2+) serves as cofactor.

The protein resides in the cytoplasm. It carries out the reaction alpha-D-glucosamine 1-phosphate + acetyl-CoA = N-acetyl-alpha-D-glucosamine 1-phosphate + CoA + H(+). The enzyme catalyses N-acetyl-alpha-D-glucosamine 1-phosphate + UTP + H(+) = UDP-N-acetyl-alpha-D-glucosamine + diphosphate. It functions in the pathway nucleotide-sugar biosynthesis; UDP-N-acetyl-alpha-D-glucosamine biosynthesis; N-acetyl-alpha-D-glucosamine 1-phosphate from alpha-D-glucosamine 6-phosphate (route II): step 2/2. The protein operates within nucleotide-sugar biosynthesis; UDP-N-acetyl-alpha-D-glucosamine biosynthesis; UDP-N-acetyl-alpha-D-glucosamine from N-acetyl-alpha-D-glucosamine 1-phosphate: step 1/1. Its pathway is bacterial outer membrane biogenesis; LPS lipid A biosynthesis. Catalyzes the last two sequential reactions in the de novo biosynthetic pathway for UDP-N-acetylglucosamine (UDP-GlcNAc). The C-terminal domain catalyzes the transfer of acetyl group from acetyl coenzyme A to glucosamine-1-phosphate (GlcN-1-P) to produce N-acetylglucosamine-1-phosphate (GlcNAc-1-P), which is converted into UDP-GlcNAc by the transfer of uridine 5-monophosphate (from uridine 5-triphosphate), a reaction catalyzed by the N-terminal domain. The protein is Bifunctional protein GlmU of Methylococcus capsulatus (strain ATCC 33009 / NCIMB 11132 / Bath).